A 325-amino-acid chain; its full sequence is MSETATWQPSASIPNLLKRAAIMTEIRRFFADRGVLEVETPCMSQATVTDIHLFPFETRFVGPGHSQGMNLYLMTSPEYHMKRLLVAGCGPVFQLCRSFRNEEMGRHHNPEFTMLEWYRPHYDMYRLMNEVDDLLQQVLECQPAESLSYQQVFQRHLEIDPLSADKTQLREAAAKLDLSNIADTEEDRDTLLQLLFTMGVEPHIGKEKPTFVYHFPASQASLAQISTEDHRVAERFEVYFKGIELANGFHELTDAREQQQRFEQDNRKRAARGLPQQPIDNNLLEALKVGMPDCSGVALGVDRLVMLALGAESLAEVIAFTVDRA.

Residue 76–78 participates in substrate binding; it reads SPE. ATP-binding positions include 100-102 and Asn-109; that span reads RNE. Tyr-118 is a substrate binding site. 244 to 245 contributes to the ATP binding site; the sequence is EL. Glu-251 serves as a coordination point for substrate. Gly-300 lines the ATP pocket.

It belongs to the class-II aminoacyl-tRNA synthetase family. EpmA subfamily. As to quaternary structure, homodimer.

The catalysed reaction is D-beta-lysine + L-lysyl-[protein] + ATP = N(6)-((3R)-3,6-diaminohexanoyl)-L-lysyl-[protein] + AMP + diphosphate + H(+). Functionally, with EpmB is involved in the beta-lysylation step of the post-translational modification of translation elongation factor P (EF-P). Catalyzes the ATP-dependent activation of (R)-beta-lysine produced by EpmB, forming a lysyl-adenylate, from which the beta-lysyl moiety is then transferred to the epsilon-amino group of a conserved specific lysine residue in EF-P. This is Elongation factor P--(R)-beta-lysine ligase from Citrobacter koseri (strain ATCC BAA-895 / CDC 4225-83 / SGSC4696).